A 119-amino-acid chain; its full sequence is 5-hydroxyisourate hydrolase (119 aa).

His10, Arg48, and Tyr116 together coordinate substrate.

This sequence belongs to the transthyretin family. 5-hydroxyisourate hydrolase subfamily. Homotetramer.

The enzyme catalyses 5-hydroxyisourate + H2O = 5-hydroxy-2-oxo-4-ureido-2,5-dihydro-1H-imidazole-5-carboxylate + H(+). The protein operates within purine metabolism; urate degradation; (S)-allantoin from urate: step 2/3. Functionally, catalyzes the hydrolysis of 5-hydroxyisourate (HIU) to 2-oxo-4-hydroxy-4-carboxy-5-ureidoimidazoline (OHCU). The protein is 5-hydroxyisourate hydrolase of Deinococcus radiodurans (strain ATCC 13939 / DSM 20539 / JCM 16871 / CCUG 27074 / LMG 4051 / NBRC 15346 / NCIMB 9279 / VKM B-1422 / R1).